Here is a 474-residue protein sequence, read N- to C-terminus: Aspartyl/glutamyl-tRNA(Asn/Gln) amidotransferase subunit B (474 aa).

This sequence belongs to the GatB/GatE family. GatB subfamily. Heterotrimer of A, B and C subunits.

It carries out the reaction L-glutamyl-tRNA(Gln) + L-glutamine + ATP + H2O = L-glutaminyl-tRNA(Gln) + L-glutamate + ADP + phosphate + H(+). The catalysed reaction is L-aspartyl-tRNA(Asn) + L-glutamine + ATP + H2O = L-asparaginyl-tRNA(Asn) + L-glutamate + ADP + phosphate + 2 H(+). Its function is as follows. Allows the formation of correctly charged Asn-tRNA(Asn) or Gln-tRNA(Gln) through the transamidation of misacylated Asp-tRNA(Asn) or Glu-tRNA(Gln) in organisms which lack either or both of asparaginyl-tRNA or glutaminyl-tRNA synthetases. The reaction takes place in the presence of glutamine and ATP through an activated phospho-Asp-tRNA(Asn) or phospho-Glu-tRNA(Gln). This chain is Aspartyl/glutamyl-tRNA(Asn/Gln) amidotransferase subunit B, found in Persephonella marina (strain DSM 14350 / EX-H1).